The chain runs to 555 residues: Phosphoglucomutase (555 aa).

Alpha-D-glucose 1,6-bisphosphate-binding residues include arginine 22 and serine 114. The active-site Phosphoserine intermediate is the serine 114. Residues serine 114, aspartate 279, aspartate 281, and aspartate 283 each contribute to the Mg(2+) site. Serine 114 bears the Phosphoserine mark. Residues aspartate 283, arginine 284, threonine 347, glutamate 366, serine 368, and lysine 379 each contribute to the alpha-D-glucose 1,6-bisphosphate site.

This sequence belongs to the phosphohexose mutase family. Monomer. The cofactor is Mg(2+).

It is found in the cytoplasm. It catalyses the reaction alpha-D-glucose 1-phosphate = alpha-D-glucose 6-phosphate. The catalysed reaction is O-phospho-L-seryl-[protein] + alpha-D-glucose 1-phosphate = alpha-D-glucose 1,6-bisphosphate + L-seryl-[protein]. It carries out the reaction alpha-D-glucose 1,6-bisphosphate + L-seryl-[protein] = O-phospho-L-seryl-[protein] + alpha-D-glucose 6-phosphate. In terms of biological role, catalyzes the reversible isomerization of alpha-D-glucose 1-phosphate to alpha-D-glucose 6-phosphate. The mechanism proceeds via the intermediate compound alpha-D-glucose 1,6-bisphosphate. Key enzyme in hexose metabolism. The reverse reaction is an essential step for biosynthesis because glucose 1-phosphate is the starting point for the synthesis of UDP-glucose, which acts as a precursor for the synthesis of oligosaccharides and trehalose. The protein is Phosphoglucomutase (pgmA) of Aspergillus fumigatus (strain ATCC MYA-4609 / CBS 101355 / FGSC A1100 / Af293) (Neosartorya fumigata).